The sequence spans 817 residues: LisH domain-containing protein ARMC9 (817 aa).

Residues 7-39 (HESELLGLVKEYLDFAEFEDTLKTFSKECKVKG) form the LisH domain. A coiled-coil region spans residues 204–230 (GPNSKELLQQLHQQLVEAERRAMTYLK). Position 583 is a phosphoserine (Ser583). Disordered regions lie at residues 637–659 (RKGP…TPGG) and 761–817 (CKPQ…SIRK). The span at 765 to 774 (VPSTPETVEQ) shows a compositional bias: polar residues. Over residues 793-807 (PQQASRPASTASSTR) the composition is skewed to low complexity. Residues 808–817 (GLHSSQSIRK) are compositionally biased toward polar residues.

Interacts with TOGARAM1, CCDC66, CEP104, CSPP1 and CEP290. Interacts with NDUFAF2.

The protein localises to the cytoplasm. Its subcellular location is the cytoskeleton. It localises to the cilium basal body. It is found in the cell projection. The protein resides in the cilium. The protein localises to the microtubule organizing center. Its subcellular location is the centrosome. It localises to the centriole. In terms of biological role, involved in ciliogenesis. It is required for appropriate acetylation and polyglutamylation of ciliary microtubules, and regulation of cilium length. Acts as a positive regulator of hedgehog (Hh) signaling. May participate in the trafficking and/or retention of GLI2 and GLI3 proteins at the ciliary tip. In Mus musculus (Mouse), this protein is LisH domain-containing protein ARMC9.